We begin with the raw amino-acid sequence, 207 residues long: MVEAFKGTTTVGIVCDGGVVLASESRATMGSFIASRTAKKIYQIDDLVGLTTAGVVGDAQALVRMIQAEARLYRMQRGEPLTIKAITSLLSNILSARRYFPFLVQLVVGGVDKMGPKIFSLDALGGQIEEHDIVSTGSGSPIAYGVLESLYKPGLSIQDGSVLCVRAVHTAMKRDSASGNGIALVRITKDRYEEVPTSEVEEIVRSL.

The propeptide at M1–G7 is removed in mature form; by autocatalysis. T8 functions as the Nucleophile in the catalytic mechanism.

This sequence belongs to the peptidase T1B family. In terms of assembly, the 20S proteasome core is composed of 14 alpha and 14 beta subunits that assemble into four stacked heptameric rings, resulting in a barrel-shaped structure. The two inner rings, each composed of seven catalytic beta subunits, are sandwiched by two outer rings, each composed of seven alpha subunits. The catalytic chamber with the active sites is on the inside of the barrel. Has a gated structure, the ends of the cylinder being occluded by the N-termini of the alpha-subunits. Is capped at one or both ends by the proteasome regulatory ATPase, PAN.

The protein localises to the cytoplasm. It catalyses the reaction Cleavage of peptide bonds with very broad specificity.. Its activity is regulated as follows. The formation of the proteasomal ATPase PAN-20S proteasome complex, via the docking of the C-termini of PAN into the intersubunit pockets in the alpha-rings, triggers opening of the gate for substrate entry. Interconversion between the open-gate and close-gate conformations leads to a dynamic regulation of the 20S proteasome proteolysis activity. Functionally, component of the proteasome core, a large protease complex with broad specificity involved in protein degradation. The polypeptide is Proteasome subunit beta (Methanothrix thermoacetophila (strain DSM 6194 / JCM 14653 / NBRC 101360 / PT) (Methanosaeta thermophila)).